Reading from the N-terminus, the 103-residue chain is Pyrimidine/purine nucleoside phosphorylase (103 aa).

The protein belongs to the nucleoside phosphorylase PpnP family.

The enzyme catalyses a purine D-ribonucleoside + phosphate = a purine nucleobase + alpha-D-ribose 1-phosphate. It carries out the reaction adenosine + phosphate = alpha-D-ribose 1-phosphate + adenine. The catalysed reaction is cytidine + phosphate = cytosine + alpha-D-ribose 1-phosphate. It catalyses the reaction guanosine + phosphate = alpha-D-ribose 1-phosphate + guanine. The enzyme catalyses inosine + phosphate = alpha-D-ribose 1-phosphate + hypoxanthine. It carries out the reaction thymidine + phosphate = 2-deoxy-alpha-D-ribose 1-phosphate + thymine. The catalysed reaction is uridine + phosphate = alpha-D-ribose 1-phosphate + uracil. It catalyses the reaction xanthosine + phosphate = alpha-D-ribose 1-phosphate + xanthine. Functionally, catalyzes the phosphorolysis of diverse nucleosides, yielding D-ribose 1-phosphate and the respective free bases. Can use uridine, adenosine, guanosine, cytidine, thymidine, inosine and xanthosine as substrates. Also catalyzes the reverse reactions. In Shewanella sp. (strain W3-18-1), this protein is Pyrimidine/purine nucleoside phosphorylase.